Consider the following 98-residue polypeptide: MAKHNGIKKRTRYKLQKTLRTRGMPNVTKVIQNFDEGQKVHLVLDSSVQKGQPHPRFHGKTGTIVGKRGRAWLLEIKDGNATKTVIARPQHLTAQKYN.

Belongs to the eukaryotic ribosomal protein eL21 family.

This chain is Large ribosomal subunit protein eL21, found in Methanocorpusculum labreanum (strain ATCC 43576 / DSM 4855 / Z).